A 588-amino-acid chain; its full sequence is Probable G-protein coupled receptor 162 (588 aa).

The Extracellular portion of the chain corresponds to 1 to 17; that stretch reads MARGGLGAEEASLRSNA. A helical transmembrane segment spans residues 18 to 38; it reads LSWLACGLLALLANAWIILSI. Residues 39–49 lie on the Cytoplasmic side of the membrane; it reads SAKQQKHKPLE. A helical transmembrane segment spans residues 50–70; it reads LLLCFLAGTHILMAAVPLTTF. Over 71 to 91 the chain is Extracellular; sequence AVVQLRRQASSDYDWNESICK. N-linked (GlcNAc...) asparagine glycosylation occurs at N86. Residues 92-112 traverse the membrane as a helical segment; it reads VFVSTYYTLALATCFTVASLS. The Cytoplasmic portion of the chain corresponds to 113 to 133; that stretch reads YHRMWMVRWPVNYRLSNAKKQ. The chain crosses the membrane as a helical span at residues 134-154; the sequence is ALHAVMGIWMVSFILSTLPSI. At 155 to 174 the chain is on the extracellular side; sequence GWHNNGERYYARGCQFIVSK. A helical membrane pass occupies residues 175 to 195; that stretch reads IGLGFGVCFSLLLLGGIVMGL. Residues 196–275 lie on the Cytoplasmic side of the membrane; it reads VCVAITFYQT…SLQVTNLVSA (80 aa). A helical membrane pass occupies residues 276-296; sequence IVFLYDSLTGVPILVVSFFSL. The Extracellular segment spans residues 297 to 303; sequence KSDSAPP. A helical membrane pass occupies residues 304 to 324; that stretch reads WMVLAVLWCSMAQTLLLPSFI. The Cytoplasmic segment spans residues 325–588; sequence WSCERYRADV…GNPIFPQLTL (264 aa). S413 and S435 each carry phosphoserine. Disordered regions lie at residues 511–545 and 561–588; these read ETPL…SPDS and SLTG…QLTL. Residues 514–525 show a composition bias toward pro residues; sequence LPSPTASPGPSP. Residues 530-540 are compositionally biased toward low complexity; sequence PLGFSPRRLSL.

It belongs to the G-protein coupled receptor 1 family.

Its subcellular location is the cell membrane. Functionally, orphan receptor. In Mus musculus (Mouse), this protein is Probable G-protein coupled receptor 162 (Gpr162).